The sequence spans 73 residues: Capsid protein G8P (73 aa).

A signal peptide spans 1 to 23 (MKKSLVLKASVAVATLVPMLSFA). Over 24-47 (AEGDDPAKAAFNSLQASATEYIGY) the chain is Periplasmic. The helical transmembrane segment at 48–68 (AWAMVVVIVGATIGIKLFKKF) threads the bilayer. The Cytoplasmic portion of the chain corresponds to 69–73 (TSKAS).

This sequence belongs to the inovirus capsid protein family. Homomultimerizes. There are about 2,700 copies of this protein in the phage capsid.

Its subcellular location is the virion. The protein resides in the host cell inner membrane. Functionally, self assembles to form a helical capsid wrapping up the viral genomic DNA. The capsid displays a filamentous structure with a length of 760-1950 nm and a width of 6-8 nm. The virion assembly and budding take place at the host inner membrane. This is Capsid protein G8P (VIII) from Enterobacteria phage M13 (Bacteriophage M13).